We begin with the raw amino-acid sequence, 347 residues long: Protein POOR HOMOLOGOUS SYNAPSIS 1 (347 aa).

The protein resides in the cytoplasm. In terms of biological role, required for accurate chromosome segregation in meiosis. Required for pairing to occur between homologous chromosomes. Acts in early recombination steps and ensures pairing fidelity and proper repair of meiotic DNA double-strand-breaks. Regulates recombination and pairing of homologous chromosomes during meiotic prophase by controlling transport of RAD50 from cytoplasm to the nucleus. May affect pairing of the gene-rich fraction of the genome rather than preventing pairing between repetitive DNA elements. This is Protein POOR HOMOLOGOUS SYNAPSIS 1 from Zea mays (Maize).